The sequence spans 473 residues: Presenilin-B (473 aa).

The tract at residues M1 to D141 is disordered. Topologically, residues M1–S164 are cytoplasmic. Residues R22–T46 show a composition bias toward polar residues. Positions N54 to Y72 are enriched in low complexity. Over residues V79 to D89 the composition is skewed to basic and acidic residues. Residues S165–V185 traverse the membrane as a helical segment. At K186 to S224 the chain is on the lumenal side. N-linked (GlcNAc...) asparagine glycosylation occurs at N190. A helical membrane pass occupies residues L225–L245. At Y246–K252 the chain is on the cytoplasmic side. A helical membrane pass occupies residues I253–F273. Over F274 to D286 the chain is Lumenal. Residues Y287 to W307 form a helical membrane-spanning segment. Residue Y308 is a topological domain, cytoplasmic. Residues A309–L329 traverse the membrane as a helical segment. Topologically, residues T330–Q334 are lumenal. Residues W335–P355 traverse the membrane as a helical segment. D348 is an active-site residue. At R356–K389 the chain is on the cytoplasmic side. The helical transmembrane segment at L390–M410 threads the bilayer. D394 is an active-site residue. Topologically, residues S411 to V413 are lumenal. Residues F414–F434 form a helical membrane-spanning segment. Over K435–P442 the chain is Cytoplasmic. The PAL motif lies at P439–L441. Positions I443–I463 form an intramembrane region, helical. Residues E464 to V473 are Cytoplasmic-facing.

The protein belongs to the peptidase A22A family. In terms of assembly, homodimer. Component of the gamma-secretase complex, a complex composed of a presenilin homodimer, nicastrin, aph1 and pen2.

The protein localises to the endoplasmic reticulum membrane. It is found in the golgi apparatus membrane. Its function is as follows. Probable catalytic subunit of the gamma-secretase complex, an endoprotease complex that catalyzes the intramembrane cleavage of integral membrane proteins such as Notch receptors. Requires the other members of the gamma-secretase complex to have a protease activity. The sequence is that of Presenilin-B (psenB) from Dictyostelium discoideum (Social amoeba).